We begin with the raw amino-acid sequence, 562 residues long: Dihydroxy-acid dehydratase (562 aa).

Aspartate 78 is a binding site for Mg(2+). A [2Fe-2S] cluster-binding site is contributed by cysteine 119. Mg(2+) contacts are provided by aspartate 120 and lysine 121. Lysine 121 carries the N6-carboxylysine modification. Residue cysteine 192 coordinates [2Fe-2S] cluster. Glutamate 449 is a Mg(2+) binding site. The active-site Proton acceptor is serine 475.

This sequence belongs to the IlvD/Edd family. As to quaternary structure, homodimer. [2Fe-2S] cluster serves as cofactor. It depends on Mg(2+) as a cofactor.

It carries out the reaction (2R)-2,3-dihydroxy-3-methylbutanoate = 3-methyl-2-oxobutanoate + H2O. The enzyme catalyses (2R,3R)-2,3-dihydroxy-3-methylpentanoate = (S)-3-methyl-2-oxopentanoate + H2O. The protein operates within amino-acid biosynthesis; L-isoleucine biosynthesis; L-isoleucine from 2-oxobutanoate: step 3/4. Its pathway is amino-acid biosynthesis; L-valine biosynthesis; L-valine from pyruvate: step 3/4. Functionally, functions in the biosynthesis of branched-chain amino acids. Catalyzes the dehydration of (2R,3R)-2,3-dihydroxy-3-methylpentanoate (2,3-dihydroxy-3-methylvalerate) into 2-oxo-3-methylpentanoate (2-oxo-3-methylvalerate) and of (2R)-2,3-dihydroxy-3-methylbutanoate (2,3-dihydroxyisovalerate) into 2-oxo-3-methylbutanoate (2-oxoisovalerate), the penultimate precursor to L-isoleucine and L-valine, respectively. In Aliarcobacter butzleri (strain RM4018) (Arcobacter butzleri), this protein is Dihydroxy-acid dehydratase.